Here is a 430-residue protein sequence, read N- to C-terminus: Protein translocase subunit SecY (430 aa).

The next 10 helical transmembrane spans lie at 18 to 38, 68 to 88, 117 to 137, 148 to 168, 179 to 199, 215 to 235, 270 to 290, 308 to 328, 368 to 388, and 390 to 410; these read IFFTLAMLVIFKIGTYIPAPG, FSIFAMGIMPYITASIVMQLL, FAIILAFIQSIGMAFQFNNYL, MSYLLIAIVLTTGTAFLLWLG, GISIIIFAGILSTLPSSLIQF, LQVAGLVIGLVLLTMGAVYVL, VIPVIFAMAFFLLPRTLTMFF, NIGMVIYIILIIAFTYFYAFV, FVGSIFLAVIAILPILATKFM, and LPQSIQVGGTSLLIVIGVAIE.

It belongs to the SecY/SEC61-alpha family. In terms of assembly, component of the Sec protein translocase complex. Heterotrimer consisting of SecY, SecE and SecG subunits. The heterotrimers can form oligomers, although 1 heterotrimer is thought to be able to translocate proteins. Interacts with the ribosome. Interacts with SecDF, and other proteins may be involved. Interacts with SecA.

The protein resides in the cell membrane. In terms of biological role, the central subunit of the protein translocation channel SecYEG. Consists of two halves formed by TMs 1-5 and 6-10. These two domains form a lateral gate at the front which open onto the bilayer between TMs 2 and 7, and are clamped together by SecE at the back. The channel is closed by both a pore ring composed of hydrophobic SecY resides and a short helix (helix 2A) on the extracellular side of the membrane which forms a plug. The plug probably moves laterally to allow the channel to open. The ring and the pore may move independently. In Staphylococcus carnosus (strain TM300), this protein is Protein translocase subunit SecY.